The primary structure comprises 605 residues: Capsid scaffolding protein (605 aa).

Catalysis depends on charge relay system residues His-48, Ser-116, and His-139. The segment at 235 to 274 (ASDAPDLQKPDKALQSPPPASTDPATMLSGNAGEGATACG) is disordered. Positions 281–300 (QDLISVPRNTFMTLLQTNLD) are interaction with pAP. Disordered stretches follow at residues 403–432 (DYVP…PGED) and 489–588 (PHQS…KSVS). The Nuclear localization signal motif lies at 410–416 (RSNKRKR). Polar residues predominate over residues 568–579 (ASASGVAQSKEP). An interaction with major capsid protein region spans residues 585–605 (KSVSAHLKSIFCEELLNKRVA).

The protein belongs to the herpesviridae capsid scaffolding protein family. Homomultimer. Interacts with major capsid protein. In terms of assembly, exists in a monomer-dimer equilibrium with the dimer being the active species. In terms of processing, capsid scaffolding protein is cleaved by assemblin after formation of the spherical procapsid. As a result, the capsid obtains its mature, icosahedral shape. Cleavages occur at two or more sites: release (R-site) and maturation (M-site).

Its subcellular location is the host cytoplasm. It is found in the host nucleus. It carries out the reaction Cleaves -Ala-|-Ser- and -Ala-|-Ala- bonds in the scaffold protein.. Its function is as follows. Acts as a scaffold protein by binding major capsid protein in the cytoplasm, inducing the nuclear localization of both proteins. Multimerizes in the nucleus such as major capsid protein forms the icosahedral T=16 capsid. Autocatalytic cleavage releases the assembly protein, and subsequently abolishes interaction with major capsid protein. Cleavages products are evicted from the capsid before or during DNA packaging. Functionally, protease that plays an essential role in virion assembly within the nucleus. Catalyzes the cleavage of the assembly protein after formation of the spherical procapsid. By that cleavage, the capsid matures and gains its icosahedral shape. The cleavage sites seem to include -Ala-Ser-, -Ala-Ala-, as well as Ala-Thr bonds. Assemblin and cleavages products are evicted from the capsid before or during DNA packaging. In terms of biological role, plays a major role in capsid assembly. Acts as a scaffold protein by binding major capsid protein. Multimerizes in the nucleus such as major capsid protein forms the icosahedral T=16 capsid. Cleaved by assemblin after capsid completion. The cleavages products are evicted from the capsid before or during DNA packaging. The protein is Capsid scaffolding protein of Homo sapiens (Human).